We begin with the raw amino-acid sequence, 635 residues long: Probable serine/threonine-protein kinase DDB_G0270146 (635 aa).

The Protein kinase domain occupies 77-329 (VISDIAIGKG…AKELLSHPWI (253 aa)). Residues 83-91 (IGKGAFATV) and K106 each bind ATP. The active-site Proton acceptor is D199. Low complexity predominate over residues 360 to 392 (SLLSNSSGGDDSVTDSDLSISNQSSRSSSFLLD). Residues 360-405 (SLLSNSSGGDDSVTDSDLSISNQSSRSSSFLLDDGGGGGGSKNHTV) are disordered. Coiled coils occupy residues 417-456 (IEFNKMQMELQLLRLRVGELETDLKKEQDLKKDSDRKYRE) and 536-585 (KKAL…KDSS). Basic and acidic residues predominate over residues 540 to 582 (EAQKRREKEQEKLKEQEKLKEKKKEKDIKKEKDKKDKKDKQLK). The tract at residues 540 to 635 (EAQKRREKEQ…GRSSSKIFNE (96 aa)) is disordered. Over residues 583 to 598 (DSSSSTTTTNSTPSTP) the composition is skewed to low complexity. Residues 626 to 635 (GRSSSKIFNE) show a composition bias toward polar residues.

It belongs to the protein kinase superfamily. STE Ser/Thr protein kinase family. Requires Mg(2+) as cofactor.

The catalysed reaction is L-seryl-[protein] + ATP = O-phospho-L-seryl-[protein] + ADP + H(+). It catalyses the reaction L-threonyl-[protein] + ATP = O-phospho-L-threonyl-[protein] + ADP + H(+). This is Probable serine/threonine-protein kinase DDB_G0270146 from Dictyostelium discoideum (Social amoeba).